Here is a 314-residue protein sequence, read N- to C-terminus: Probable cell division protein WhiA (314 aa).

Residues 282–314 (SLKELGELCRPPVSKSGAAHRMRQLMALAESLE) constitute a DNA-binding region (H-T-H motif).

It belongs to the WhiA family.

Functionally, involved in cell division and chromosome segregation. This Symbiobacterium thermophilum (strain DSM 24528 / JCM 14929 / IAM 14863 / T) protein is Probable cell division protein WhiA.